The sequence spans 404 residues: SL1278 acyltransferase Chp1 (404 aa).

Residues 1–42 lie on the Periplasmic side of the membrane; it reads MKCPGVSDCVATVRHDNVFAIAAGLRWSAAVPPLHKGDAVTK. A helical transmembrane segment spans residues 43–63; that stretch reads LLVGAIAGGMLACAAILGDGI. At 64 to 404 the chain is on the cytoplasmic side; it reads ASADTALIVP…RGLLPKGKKH (341 aa). One can recognise a PE-PPE domain in the interval 104–325; sequence PTATRHVVSY…LRPIIDRAYQ (222 aa).

Belongs to the mycobacterial PPE family.

It is found in the cell inner membrane. It catalyses the reaction 3 3'-(hydroxy)phthioceranyl-2'-palmitoyl(stearoyl)-2-O-sulfo-alpha,alpha-trehalose = 3,6,6'-tris-(hydroxy)phthioceranyl-2-palmitoyl(stearoyl)-2'-sulfo-alpha-alpha-trehalose + 2 2'-palmitoyl/stearoyl-2-O-sulfo-alpha,alpha-trehalose.. With respect to regulation, activity is potentiated by the SL-1 transporter MmpL8. Inhibited by the lipase inhibitor tetrahydrolipstatin (THL). Its function is as follows. Involved in the final steps of the cell wall sulfolipid-1 (SL-1) biosynthesis. Catalyzes two successive acylations of the precursor 2-palmitoyl-3-(C43)-phthioceranyl-alpha, alpha'-D-trehalose-2'-sulfate (SL1278) to yield the tetraacylated sulfolipid SL-1. The protein is SL1278 acyltransferase Chp1 of Mycobacterium tuberculosis (strain ATCC 25618 / H37Rv).